The following is a 38-amino-acid chain: Large ribosomal subunit protein bL36 (38 aa).

This sequence belongs to the bacterial ribosomal protein bL36 family.

This chain is Large ribosomal subunit protein bL36, found in Amoebophilus asiaticus (strain 5a2).